The primary structure comprises 620 residues: Glutathione-regulated potassium-efflux system protein KefC (620 aa).

A run of 12 helical transmembrane segments spans residues 4–24 (HTLI…PIAV), 26–46 (LGLG…PWGL), 54–74 (SILH…GLEL), 90–110 (GALQ…LLGL), 114–134 (VAEL…MQAM), 149–169 (FAVL…IPLL), 178–198 (MGAF…VVLL), 218–238 (VFSA…EEVG), 270–290 (GLLL…GTLI), 294–314 (LRIV…LWLI), 327–347 (WFAV…GAAQ), and 359–379 (SLTL…VILN). Residues 399–518 (QPRVIIAGFG…AGVEKPERET (120 aa)) enclose the RCK N-terminal domain. Positions 597 to 620 (GWQGTEEGKHTGNMADEPETKPSS) are disordered.

The protein belongs to the monovalent cation:proton antiporter 2 (CPA2) transporter (TC 2.A.37) family. KefC subfamily. Homodimer. Interacts with the regulatory subunit KefF.

The protein localises to the cell inner membrane. Its function is as follows. Pore-forming subunit of a potassium efflux system that confers protection against electrophiles. Catalyzes K(+)/H(+) antiport. The sequence is that of Glutathione-regulated potassium-efflux system protein KefC from Escherichia coli (strain SMS-3-5 / SECEC).